The sequence spans 215 residues: tRNA (guanine-N(7)-)-methyltransferase (215 aa).

Positions 43, 68, 95, and 121 each coordinate S-adenosyl-L-methionine. Residue Asp-121 is part of the active site. Substrate is bound by residues Lys-125 and Asp-157.

The protein belongs to the class I-like SAM-binding methyltransferase superfamily. TrmB family.

It carries out the reaction guanosine(46) in tRNA + S-adenosyl-L-methionine = N(7)-methylguanosine(46) in tRNA + S-adenosyl-L-homocysteine. It participates in tRNA modification; N(7)-methylguanine-tRNA biosynthesis. Catalyzes the formation of N(7)-methylguanine at position 46 (m7G46) in tRNA. This chain is tRNA (guanine-N(7)-)-methyltransferase, found in Trichormus variabilis (strain ATCC 29413 / PCC 7937) (Anabaena variabilis).